The primary structure comprises 142 residues: Large ribosomal subunit protein uL13 (142 aa).

It belongs to the universal ribosomal protein uL13 family. As to quaternary structure, part of the 50S ribosomal subunit.

This protein is one of the early assembly proteins of the 50S ribosomal subunit, although it is not seen to bind rRNA by itself. It is important during the early stages of 50S assembly. This Idiomarina loihiensis (strain ATCC BAA-735 / DSM 15497 / L2-TR) protein is Large ribosomal subunit protein uL13.